Reading from the N-terminus, the 561-residue chain is ATP-dependent RNA helicase MRH4, mitochondrial (561 aa).

A mitochondrion-targeting transit peptide spans 1 to 26 (MSLFFKPVISPQWSFPVLLKIGVRSY). A disordered region spans residues 29–72 (GPRTKHKGNSPLASVPTGSSNKNRKQKAKGKKGNKKNDPDQAFN). Residues 50-62 (KNRKQKAKGKKGN) show a composition bias toward basic residues. A Q motif motif is present at residues 98 to 129 (SNFDQLLILPPVRDAVKEIISKESLKLQDSRK). The 189-residue stretch at 131-319 (TSENIIPSPI…NINHLIFCSA (189 aa)) folds into the Helicase ATP-binding domain. Residue 144 to 151 (AIKRISKN) coordinates ATP. Positions 267–270 (SIRM) match the DEAD box motif. A Helicase C-terminal domain is found at 350–539 (ALDFKVINSA…KQGGRVFMLT (190 aa)).

This sequence belongs to the DEAD box helicase family. MRH4 subfamily.

The protein localises to the mitochondrion. It catalyses the reaction ATP + H2O = ADP + phosphate + H(+). In terms of biological role, ATP-binding RNA helicase involved in mitochondrial RNA metabolism. Required for maintenance of mitochondrial DNA. This is ATP-dependent RNA helicase MRH4, mitochondrial (MRH4) from Saccharomyces cerevisiae (strain YJM789) (Baker's yeast).